The primary structure comprises 95 residues: Phospholipase A2 inhibitor gammaCdcPLI (95 aa).

4 disulfide bridges follow: Cys-2-Cys-26, Cys-5-Cys-12, Cys-19-Cys-30, and Cys-61-Cys-77.

In terms of assembly, forms dimers or higher order oligomers in a temperature-dependent manner in vitro. Expressed by the liver.

It localises to the secreted. In terms of biological role, inhibits the enzymatic activity of basic and acidic PLA2 from B.jararacussu and B.pauloensis, respectively, in a dose-dependent manner. Also inhibits myotoxicity and cytotoxicity of BnSp-7 of B.pauloensis. In Crotalus durissus collilineatus (Brazilian rattlesnake), this protein is Phospholipase A2 inhibitor gammaCdcPLI.